Consider the following 113-residue polypeptide: T cell receptor alpha variable 8-6 (113 aa).

Residues 1–20 (MLLLLVPAFQVIFTLGGTRA) form the signal peptide. The 93-residue stretch at 21–113 (QSVTQLDSQV…DTAEYFCAVS (93 aa)) folds into the Ig-like domain. A disulfide bridge links C42 with C110. N-linked (GlcNAc...) asparagine glycosylation is found at N43 and N87.

In terms of assembly, alpha-beta TR is a heterodimer composed of an alpha and beta chain; disulfide-linked. The alpha-beta TR is associated with the transmembrane signaling CD3 coreceptor proteins to form the TR-CD3 (TcR or TCR). The assembly of alpha-beta TR heterodimers with CD3 occurs in the endoplasmic reticulum where a single alpha-beta TR heterodimer associates with one CD3D-CD3E heterodimer, one CD3G-CD3E heterodimer and one CD247 homodimer forming a stable octameric structure. CD3D-CD3E and CD3G-CD3E heterodimers preferentially associate with TR alpha and TR beta chains, respectively. The association of the CD247 homodimer is the last step of TcR assembly in the endoplasmic reticulum and is required for transport to the cell surface.

The protein localises to the cell membrane. In terms of biological role, v region of the variable domain of T cell receptor (TR) alpha chain that participates in the antigen recognition. Alpha-beta T cell receptors are antigen specific receptors which are essential to the immune response and are present on the cell surface of T lymphocytes. Recognize peptide-major histocompatibility (MH) (pMH) complexes that are displayed by antigen presenting cells (APC), a prerequisite for efficient T cell adaptive immunity against pathogens. Binding of alpha-beta TR to pMH complex initiates TR-CD3 clustering on the cell surface and intracellular activation of LCK that phosphorylates the ITAM motifs of CD3G, CD3D, CD3E and CD247 enabling the recruitment of ZAP70. In turn ZAP70 phosphorylates LAT, which recruits numerous signaling molecules to form the LAT signalosome. The LAT signalosome propagates signal branching to three major signaling pathways, the calcium, the mitogen-activated protein kinase (MAPK) kinase and the nuclear factor NF-kappa-B (NF-kB) pathways, leading to the mobilization of transcription factors that are critical for gene expression and essential for T cell growth and differentiation. The T cell repertoire is generated in the thymus, by V-(D)-J rearrangement. This repertoire is then shaped by intrathymic selection events to generate a peripheral T cell pool of self-MH restricted, non-autoaggressive T cells. Post-thymic interaction of alpha-beta TR with the pMH complexes shapes TR structural and functional avidity. This chain is T cell receptor alpha variable 8-6, found in Homo sapiens (Human).